The primary structure comprises 95 residues: Small ribosomal subunit protein bS6 (95 aa).

This sequence belongs to the bacterial ribosomal protein bS6 family.

Functionally, binds together with bS18 to 16S ribosomal RNA. In Corynebacterium glutamicum (strain ATCC 13032 / DSM 20300 / JCM 1318 / BCRC 11384 / CCUG 27702 / LMG 3730 / NBRC 12168 / NCIMB 10025 / NRRL B-2784 / 534), this protein is Small ribosomal subunit protein bS6.